The following is a 198-amino-acid chain: MSAMMVKLGLNKSALLLKPSAFSRAAALSSSRRLLFNTARTNFLSTSPLKNVASEMNTKAAIAEEQILNKQRAKRPISPHLTIYQPQLTWYLSSLHRISLVLMGLGFYLFTILFGVSGLLGLGLTTEKVSNWYHQKFSKITEWSIKGSFAYLFAIHYGGAIRHLIWDTAKELTLKGVYRTGYALIGFTAVLGTYLLTL.

Residues 1–50 (MSAMMVKLGLNKSALLLKPSAFSRAAALSSSRRLLFNTARTNFLSTSPLK) constitute a mitochondrion transit peptide. The Mitochondrial matrix segment spans residues 51-99 (NVASEMNTKAAIAEEQILNKQRAKRPISPHLTIYQPQLTWYLSSLHRIS). A ubiquinone contacts are provided by S93 and R97. A helical transmembrane segment spans residues 100-120 (LVLMGLGFYLFTILFGVSGLL). Over 121 to 139 (GLGLTTEKVSNWYHQKFSK) the chain is Mitochondrial intermembrane. Residues 140–160 (ITEWSIKGSFAYLFAIHYGGA) form a helical membrane-spanning segment. A heme-binding site is contributed by H156. Residues 161 to 175 (IRHLIWDTAKELTLK) are Mitochondrial matrix-facing. A helical membrane pass occupies residues 176–196 (GVYRTGYALIGFTAVLGTYLL). The Mitochondrial intermembrane segment spans residues 197–198 (TL).

The protein belongs to the cytochrome b560 family. As to quaternary structure, forms part of complex II containing four subunits: a flavoprotein (FP), an iron-sulfur protein (IP) and a cytochrome b composed of two integral membrane proteins. Requires heme as cofactor.

The protein localises to the mitochondrion inner membrane. The protein operates within carbohydrate metabolism; tricarboxylic acid cycle. Functionally, membrane-anchoring mono-heme cytochrome b subunit of succinate dehydrogenase (SDH) that is involved in system II of the mitochondrial electron transport chain and is responsible for transferring electrons from succinate to ubiquinone (coenzyme Q). SDH3 and SDH4 form the membrane dimer that anchors the catalytic dimer formed by SDH1 and SDH2 to the matrix surface of the mitochondrial inner membrane. Electrons originating from the catalytic dimer enter the membrane dimer for ubiquinone reduction. The protein is Succinate dehydrogenase [ubiquinone] cytochrome b subunit, mitochondrial (SDH3) of Saccharomyces cerevisiae (strain ATCC 204508 / S288c) (Baker's yeast).